Here is a 430-residue protein sequence, read N- to C-terminus: MDRIRIVGGNELNGIIPISGAKNAALPLMIASLLTSDTLTLENVPHLADVELLMRILGNHGVDVAVNGRRERQEDSYSRTIHFTCRTIVDTTASYELVSKMRASFWVIGPLLAREGHCRVSLPGGCAIGTRPVDLFIEGLTALGATMEIDAGYINAKAPAGGLIGARYTFPKVSVGATHVMMMAATLARGTTVIGNAAREPEVVDLANCLNAMGAKITGAGTATITIEGVTSLSGARHRVLPDRIETGTYAMAVAMAGGDVVLENTDVALLETAVETLRRAGAEISSTNNGMRIKRNGAGIRPVDIVTDPFPGFPTDLQAQFMALMTRSSGVSHVTETIFENRFMHVQELARLGARISLSGQTAKIEGVQRLRGAPVMATDLRASVSLVIAGLAAEGETTVSRVYHLDRGFERLEEKLTRCGAIVERISE.

Lys22 to Asn23 provides a ligand contact to phosphoenolpyruvate. Position 102 (Arg102) interacts with UDP-N-acetyl-alpha-D-glucosamine. The active-site Proton donor is Cys126. The residue at position 126 (Cys126) is a 2-(S-cysteinyl)pyruvic acid O-phosphothioketal. Residues Arg131 to Leu135, Lys172 to Val175, Asp317, and Ile339 contribute to the UDP-N-acetyl-alpha-D-glucosamine site.

This sequence belongs to the EPSP synthase family. MurA subfamily.

It localises to the cytoplasm. The enzyme catalyses phosphoenolpyruvate + UDP-N-acetyl-alpha-D-glucosamine = UDP-N-acetyl-3-O-(1-carboxyvinyl)-alpha-D-glucosamine + phosphate. It functions in the pathway cell wall biogenesis; peptidoglycan biosynthesis. Functionally, cell wall formation. Adds enolpyruvyl to UDP-N-acetylglucosamine. The chain is UDP-N-acetylglucosamine 1-carboxyvinyltransferase from Rhizobium johnstonii (strain DSM 114642 / LMG 32736 / 3841) (Rhizobium leguminosarum bv. viciae).